A 262-amino-acid chain; its full sequence is Ribosomal RNA small subunit methyltransferase A (262 aa).

S-adenosyl-L-methionine-binding residues include I18, G43, E65, D91, and N110.

The protein belongs to the class I-like SAM-binding methyltransferase superfamily. rRNA adenine N(6)-methyltransferase family. RsmA subfamily.

The protein resides in the cytoplasm. It catalyses the reaction adenosine(1518)/adenosine(1519) in 16S rRNA + 4 S-adenosyl-L-methionine = N(6)-dimethyladenosine(1518)/N(6)-dimethyladenosine(1519) in 16S rRNA + 4 S-adenosyl-L-homocysteine + 4 H(+). Its function is as follows. Specifically dimethylates two adjacent adenosines (A1518 and A1519) in the loop of a conserved hairpin near the 3'-end of 16S rRNA in the 30S particle. May play a critical role in biogenesis of 30S subunits. This chain is Ribosomal RNA small subunit methyltransferase A, found in Ehrlichia canis (strain Jake).